The chain runs to 413 residues: Eukaryotic initiation factor 4A-11 (413 aa).

The Q motif signature appears at 40-68; that stretch reads ESFDAMGLQENLLRGIYAYGFEKPSAIQQ. Positions 71–241 constitute a Helicase ATP-binding domain; it reads IVPFCKGLDV…RKFMNKPVRI (171 aa). 84-91 provides a ligand contact to ATP; sequence AQSGTGKT. Residues 189–192 carry the DEAD box motif; it reads DEAD. A Helicase C-terminal domain is found at 252–413; that stretch reads GIKQFYVNVD…ELPANVADLL (162 aa).

It belongs to the DEAD box helicase family. eIF4A subfamily. As to quaternary structure, eIF4F is a multi-subunit complex, the composition of which varies with external and internal environmental conditions. It is composed of at least EIF4A, EIF4E and EIF4G.

The catalysed reaction is ATP + H2O = ADP + phosphate + H(+). Its function is as follows. ATP-dependent RNA helicase which is a subunit of the eIF4F complex involved in cap recognition and is required for mRNA binding to ribosome. In the current model of translation initiation, eIF4A unwinds RNA secondary structures in the 5'-UTR of mRNAs which is necessary to allow efficient binding of the small ribosomal subunit, and subsequent scanning for the initiator codon. The sequence is that of Eukaryotic initiation factor 4A-11 from Nicotiana tabacum (Common tobacco).